The following is a 105-amino-acid chain: Small ribosomal subunit protein uS10 (105 aa).

This sequence belongs to the universal ribosomal protein uS10 family. As to quaternary structure, part of the 30S ribosomal subunit.

Involved in the binding of tRNA to the ribosomes. The chain is Small ribosomal subunit protein uS10 from Roseobacter denitrificans (strain ATCC 33942 / OCh 114) (Erythrobacter sp. (strain OCh 114)).